Consider the following 313-residue polypeptide: Calcyphosin-2 (313 aa).

3 consecutive EF-hand domains span residues 144–179, 180–215, and 216–251; these read RILT…FHLE, VSEK…EMNE, and YRKS…KKHS. 5 residues coordinate Ca(2+): D193, N195, N197, K199, and E204.

In Macaca fascicularis (Crab-eating macaque), this protein is Calcyphosin-2 (CAPS2).